Consider the following 159-residue polypeptide: Cyclic pyranopterin monophosphate synthase (159 aa).

Substrate-binding positions include 75 to 77 (LCH) and 113 to 114 (ME). The active site involves Asp128.

This sequence belongs to the MoaC family. As to quaternary structure, homohexamer; trimer of dimers.

It catalyses the reaction (8S)-3',8-cyclo-7,8-dihydroguanosine 5'-triphosphate = cyclic pyranopterin phosphate + diphosphate. It participates in cofactor biosynthesis; molybdopterin biosynthesis. Its function is as follows. Catalyzes the conversion of (8S)-3',8-cyclo-7,8-dihydroguanosine 5'-triphosphate to cyclic pyranopterin monophosphate (cPMP). In Aliivibrio fischeri (strain MJ11) (Vibrio fischeri), this protein is Cyclic pyranopterin monophosphate synthase.